Reading from the N-terminus, the 162-residue chain is Ciliary microtubule inner protein 5 (162 aa).

Positions 1-44 (MGSHPTPGLQRTTSAGYRLPPTRPPASVSPAARGGPMASRGLAG) are disordered.

It is found in the cell projection. It localises to the cilium. This is Ciliary microtubule inner protein 5 from Homo sapiens (Human).